The chain runs to 247 residues: UPF0309 protein lin2794 (247 aa).

One can recognise an SIS domain in the interval 31 to 214 (VAESIENDGV…EKMVNDNFTP (184 aa)).

Belongs to the UPF0309 family.

In Listeria innocua serovar 6a (strain ATCC BAA-680 / CLIP 11262), this protein is UPF0309 protein lin2794.